A 334-amino-acid chain; its full sequence is Eukaryotic translation initiation factor 3 subunit H (334 aa).

The 133-residue stretch at 20–152 (VQCDGLAAMK…LKAYRLTPQA (133 aa)) folds into the MPN domain.

Belongs to the eIF-3 subunit H family. As to quaternary structure, component of the eukaryotic translation initiation factor 3 (eIF-3) complex.

The protein resides in the cytoplasm. In terms of biological role, component of the eukaryotic translation initiation factor 3 (eIF-3) complex, which is involved in protein synthesis of a specialized repertoire of mRNAs and, together with other initiation factors, stimulates binding of mRNA and methionyl-tRNAi to the 40S ribosome. The eIF-3 complex specifically targets and initiates translation of a subset of mRNAs involved in cell proliferation. This is Eukaryotic translation initiation factor 3 subunit H from Anopheles gambiae (African malaria mosquito).